A 937-amino-acid chain; its full sequence is DNA mismatch repair protein msh-2 (937 aa).

659–666 is a binding site for ATP; it reads GPNMGGKS.

The protein belongs to the DNA mismatch repair MutS family. In terms of assembly, heterodimer of msh2 and msh6.

Its subcellular location is the nucleus. In terms of biological role, involved in post-replicative DNA-mismatch repair. Binds to mismatch-containing DNA. The sequence is that of DNA mismatch repair protein msh-2 (msh-2) from Neurospora crassa (strain ATCC 24698 / 74-OR23-1A / CBS 708.71 / DSM 1257 / FGSC 987).